We begin with the raw amino-acid sequence, 154 residues long: Aspartate carbamoyltransferase regulatory chain (154 aa).

4 residues coordinate Zn(2+): Cys-109, Cys-114, Cys-138, and Cys-141.

It belongs to the PyrI family. As to quaternary structure, contains catalytic and regulatory chains. It depends on Zn(2+) as a cofactor.

Its function is as follows. Involved in allosteric regulation of aspartate carbamoyltransferase. In Methanothrix thermoacetophila (strain DSM 6194 / JCM 14653 / NBRC 101360 / PT) (Methanosaeta thermophila), this protein is Aspartate carbamoyltransferase regulatory chain.